Consider the following 111-residue polypeptide: Large ribosomal subunit protein uL22 (111 aa).

The protein belongs to the universal ribosomal protein uL22 family. As to quaternary structure, part of the 50S ribosomal subunit.

Its function is as follows. This protein binds specifically to 23S rRNA; its binding is stimulated by other ribosomal proteins, e.g. L4, L17, and L20. It is important during the early stages of 50S assembly. It makes multiple contacts with different domains of the 23S rRNA in the assembled 50S subunit and ribosome. Functionally, the globular domain of the protein is located near the polypeptide exit tunnel on the outside of the subunit, while an extended beta-hairpin is found that lines the wall of the exit tunnel in the center of the 70S ribosome. The protein is Large ribosomal subunit protein uL22 of Chlamydia abortus (strain DSM 27085 / S26/3) (Chlamydophila abortus).